Consider the following 423-residue polypeptide: Mannose-6-phosphate isomerase (423 aa).

Position 2 is an N-acetylalanine (Ala-2). 2 positions are modified to phosphoserine: Ser-102 and Ser-108. Residues Gln-110, His-112, Glu-137, and His-276 each coordinate Zn(2+). The active site involves Arg-295.

The protein belongs to the mannose-6-phosphate isomerase type 1 family. The cofactor is Zn(2+).

It localises to the cytoplasm. The enzyme catalyses D-mannose 6-phosphate = D-fructose 6-phosphate. The protein operates within nucleotide-sugar biosynthesis; GDP-alpha-D-mannose biosynthesis; alpha-D-mannose 1-phosphate from D-fructose 6-phosphate: step 1/2. Functionally, isomerase that catalyzes the interconversion of fructose-6-P and mannose-6-P and has a critical role in the supply of D-mannose derivatives required for many eukaryotic glycosylation reactions. In Pan troglodytes (Chimpanzee), this protein is Mannose-6-phosphate isomerase (MPI).